A 300-amino-acid chain; its full sequence is 2-methylisocitrate lyase (300 aa).

53–55 (SGD) provides a ligand contact to substrate. Residues Asp92 and Asp94 each contribute to the Mg(2+) site. Substrate is bound by residues 129–130 (CG), Arg162, Glu192, 214–216 (NMT), Arg245, and Arg274.

Belongs to the isocitrate lyase/PEP mutase superfamily. Methylisocitrate lyase family. Mg(2+) is required as a cofactor.

It carries out the reaction 3-hydroxybutane-1,2,3-tricarboxylate = pyruvate + succinate. In terms of biological role, involved in the methylcitric acid cycle. Catalyzes the cleavage of 2-methylisocitrate to yield pyruvate and succinate. The protein is 2-methylisocitrate lyase of Halalkalibacterium halodurans (strain ATCC BAA-125 / DSM 18197 / FERM 7344 / JCM 9153 / C-125) (Bacillus halodurans).